The following is a 256-amino-acid chain: LexA repressor (256 aa).

Residues 1–31 (MTSQGRGTRRGGTRGNVRAFPEGPTDAGLTP) are disordered. The H-T-H motif DNA-binding region spans 53–73 (VREIGEAVGLTSTSSVAHQLK). Residues S180 and K217 each act as for autocatalytic cleavage activity in the active site.

Belongs to the peptidase S24 family. In terms of assembly, homodimer.

The catalysed reaction is Hydrolysis of Ala-|-Gly bond in repressor LexA.. In terms of biological role, represses a number of genes involved in the response to DNA damage (SOS response), including recA and lexA. In the presence of single-stranded DNA, RecA interacts with LexA causing an autocatalytic cleavage which disrupts the DNA-binding part of LexA, leading to derepression of the SOS regulon and eventually DNA repair. This is LexA repressor from Frankia casuarinae (strain DSM 45818 / CECT 9043 / HFP020203 / CcI3).